Consider the following 404-residue polypeptide: S-adenosylmethionine synthase (404 aa).

139 to 144 contributes to the ATP binding site; the sequence is GKGSSD.

It belongs to the AdoMet synthase 2 family. Mg(2+) serves as cofactor.

It carries out the reaction L-methionine + ATP + H2O = S-adenosyl-L-methionine + phosphate + diphosphate. It participates in amino-acid biosynthesis; S-adenosyl-L-methionine biosynthesis; S-adenosyl-L-methionine from L-methionine: step 1/1. Catalyzes the formation of S-adenosylmethionine from methionine and ATP. This chain is S-adenosylmethionine synthase, found in Saccharolobus solfataricus (strain ATCC 35092 / DSM 1617 / JCM 11322 / P2) (Sulfolobus solfataricus).